Here is a 985-residue protein sequence, read N- to C-terminus: P3N-PIPO polyprotein (985 aa).

Residues 144 to 287 (TFRDGHMNKF…MATVTHMEQY (144 aa)) form the Peptidase S30 domain. Active-site for P1 proteinase activity residues include histidine 195, aspartate 204, and serine 238. The short motif at 337–340 (KLTC) is the Involved in interaction with stylet and aphid transmission element. An Involved in virions binding and aphid transmission motif is present at residues 595 to 597 (PTK). Residues 621 to 743 (LYIALDGYCY…ESEIKHYRVG (123 aa)) enclose the Peptidase C6 domain. Active-site for helper component proteinase activity residues include cysteine 629 and histidine 702.

The protein belongs to the potyviridae P3N-PIPO polyprotein family. In terms of assembly, interacts (via PIPO domain) with host PCaP1 protein; this interaction may help to anchor the movement complex to the plasma membrane from which the complex could move to the plasmodesmata. Potyviral RNA is expressed as two polyproteins which undergo post-translational proteolytic processing. Genome polyprotein is processed by NIa-pro, P1 and HC-pro proteinases resulting in the production of at least ten individual proteins. P3N-PIPO is cleaved by P1 and HC-pro proteinases resulting in the production of three individual proteins. The P1 proteinase and the HC-pro cleave only their respective C-termini autocatalytically.

Its subcellular location is the host cell junction. It localises to the host plasmodesma. It catalyses the reaction Hydrolyzes a Gly-|-Gly bond at its own C-terminus, commonly in the sequence -Tyr-Xaa-Val-Gly-|-Gly, in the processing of the potyviral polyprotein.. Functionally, required for aphid transmission and also has proteolytic activity. Only cleaves a Gly-Gly dipeptide at its own C-terminus. Interacts with virions and aphid stylets. Acts as a suppressor of RNA-mediated gene silencing, also known as post-transcriptional gene silencing (PTGS), a mechanism of plant viral defense that limits the accumulation of viral RNAs. May have RNA-binding activity. In terms of biological role, allows efficient cell to cell propagation, by bypassing the host cell wall barrier. Transports viral genome to neighboring plant cells directly through plasmosdesmata, without any budding. The protein is P3N-PIPO polyprotein of Pepper mottle virus (isolate California) (PeMV).